A 119-amino-acid polypeptide reads, in one-letter code: Beta-2-microglobulin (119 aa).

The N-terminal stretch at 1–20 is a signal peptide; that stretch reads MSPSVALAVLALLSLSGLEA. The Ig-like C1-type domain occupies 25–114; the sequence is PKIQVYSRHP…VTLSGPRTVK (90 aa). Cysteine 45 and cysteine 100 are disulfide-bonded.

The protein belongs to the beta-2-microglobulin family. As to quaternary structure, heterodimer of an alpha chain and a beta chain. Beta-2-microglobulin is the beta-chain of major histocompatibility complex class I molecules.

It is found in the secreted. Its function is as follows. Component of the class I major histocompatibility complex (MHC). Involved in the presentation of peptide antigens to the immune system. In Macaca fascicularis (Crab-eating macaque), this protein is Beta-2-microglobulin (B2M).